We begin with the raw amino-acid sequence, 358 residues long: Alternative oxidase, mitochondrial (358 aa).

The chain crosses the membrane as a helical span at residues 152 to 172; it reads LIRMVFLESVAGVPGMVAGML. Fe cation-binding residues include glutamate 159, glutamate 198, and histidine 201. Residues 217–237 form a helical membrane-spanning segment; it reads FMIIGAQGVFFNSMFLSYLIS. Residues glutamate 249, glutamate 250, glutamate 306, and histidine 309 each coordinate Fe cation.

It belongs to the alternative oxidase family. The cofactor is Fe cation.

The protein resides in the mitochondrion inner membrane. Catalyzes cyanide-resistant oxygen consumption. May increase respiration when the cytochrome respiratory pathway is restricted, or in response to low temperatures. The sequence is that of Alternative oxidase, mitochondrial from Blumeria graminis (Powdery mildew).